Here is a 148-residue protein sequence, read N- to C-terminus: Large ribosomal subunit protein bL9 (148 aa).

The protein belongs to the bacterial ribosomal protein bL9 family.

Binds to the 23S rRNA. The polypeptide is Large ribosomal subunit protein bL9 (Marinobacter nauticus (strain ATCC 700491 / DSM 11845 / VT8) (Marinobacter aquaeolei)).